A 380-amino-acid polypeptide reads, in one-letter code: Zinc metalloproteinase-like protein nas-21 (380 aa).

A signal peptide spans 1-24 (MNYFITFFFMHIAVLNFYFRFSNG). The region spanning 46–234 (QALRMDNEPR…LMINEYYQCS (189 aa)) is the Peptidase M12A domain. An N-linked (GlcNAc...) asparagine glycan is attached at Asn-87. 2 disulfides stabilise this stretch: Cys-90-Cys-233 and Cys-110-Cys-130. Glu-138 is a catalytic residue. N-linked (GlcNAc...) asparagine glycans are attached at residues Asn-253, Asn-269, Asn-283, and Asn-304.

The protein localises to the secreted. In terms of biological role, may lack metalloprotease activity. The polypeptide is Zinc metalloproteinase-like protein nas-21 (nas-21) (Caenorhabditis elegans).